A 120-amino-acid chain; its full sequence is Prefoldin subunit beta (120 aa).

This sequence belongs to the prefoldin subunit beta family. Heterohexamer of two alpha and four beta subunits.

The protein localises to the cytoplasm. Molecular chaperone capable of stabilizing a range of proteins. Seems to fulfill an ATP-independent, HSP70-like function in archaeal de novo protein folding. This is Prefoldin subunit beta from Methanothrix thermoacetophila (strain DSM 6194 / JCM 14653 / NBRC 101360 / PT) (Methanosaeta thermophila).